The primary structure comprises 359 residues: DNA replication and repair protein RecF (359 aa).

30–37 contributes to the ATP binding site; sequence GPNGSGKT.

It belongs to the RecF family.

The protein resides in the cytoplasm. The RecF protein is involved in DNA metabolism; it is required for DNA replication and normal SOS inducibility. RecF binds preferentially to single-stranded, linear DNA. It also seems to bind ATP. In Vibrio parahaemolyticus serotype O3:K6 (strain RIMD 2210633), this protein is DNA replication and repair protein RecF.